The primary structure comprises 447 residues: Probable glycine dehydrogenase (decarboxylating) subunit 1 (447 aa).

The protein belongs to the GcvP family. N-terminal subunit subfamily. In terms of assembly, the glycine cleavage system is composed of four proteins: P, T, L and H. In this organism, the P 'protein' is a heterodimer of two subunits.

It catalyses the reaction N(6)-[(R)-lipoyl]-L-lysyl-[glycine-cleavage complex H protein] + glycine + H(+) = N(6)-[(R)-S(8)-aminomethyldihydrolipoyl]-L-lysyl-[glycine-cleavage complex H protein] + CO2. The glycine cleavage system catalyzes the degradation of glycine. The P protein binds the alpha-amino group of glycine through its pyridoxal phosphate cofactor; CO(2) is released and the remaining methylamine moiety is then transferred to the lipoamide cofactor of the H protein. The polypeptide is Probable glycine dehydrogenase (decarboxylating) subunit 1 (Bacillus thuringiensis subsp. konkukian (strain 97-27)).